The chain runs to 362 residues: Aminomethyltransferase (362 aa).

This sequence belongs to the GcvT family. As to quaternary structure, the glycine cleavage system is composed of four proteins: P, T, L and H.

The enzyme catalyses N(6)-[(R)-S(8)-aminomethyldihydrolipoyl]-L-lysyl-[protein] + (6S)-5,6,7,8-tetrahydrofolate = N(6)-[(R)-dihydrolipoyl]-L-lysyl-[protein] + (6R)-5,10-methylene-5,6,7,8-tetrahydrofolate + NH4(+). Functionally, the glycine cleavage system catalyzes the degradation of glycine. In Listeria innocua serovar 6a (strain ATCC BAA-680 / CLIP 11262), this protein is Aminomethyltransferase.